The primary structure comprises 385 residues: 4-hydroxy-3-methylbut-2-en-1-yl diphosphate synthase (flavodoxin) (385 aa).

The [4Fe-4S] cluster site is built by Cys282, Cys285, Cys317, and Glu324.

This sequence belongs to the IspG family. Requires [4Fe-4S] cluster as cofactor.

It catalyses the reaction (2E)-4-hydroxy-3-methylbut-2-enyl diphosphate + oxidized [flavodoxin] + H2O + 2 H(+) = 2-C-methyl-D-erythritol 2,4-cyclic diphosphate + reduced [flavodoxin]. The protein operates within isoprenoid biosynthesis; isopentenyl diphosphate biosynthesis via DXP pathway; isopentenyl diphosphate from 1-deoxy-D-xylulose 5-phosphate: step 5/6. Its function is as follows. Converts 2C-methyl-D-erythritol 2,4-cyclodiphosphate (ME-2,4cPP) into 1-hydroxy-2-methyl-2-(E)-butenyl 4-diphosphate. The polypeptide is 4-hydroxy-3-methylbut-2-en-1-yl diphosphate synthase (flavodoxin) (Nocardia farcinica (strain IFM 10152)).